We begin with the raw amino-acid sequence, 255 residues long: Small ribosomal subunit protein uS2 (255 aa).

Positions 233–255 (DFVAEEAASEESLEELAEIVEGK) are disordered.

The protein belongs to the universal ribosomal protein uS2 family.

The polypeptide is Small ribosomal subunit protein uS2 (Lactococcus lactis subsp. cremoris (strain SK11)).